The following is a 394-amino-acid chain: MRKGLASRVSHLKPSPTLTITAKAKELRAKGVDVIGFGAGEPDFDTPDFIKEACIRALREGKTKYAPSAGIPELREAIAEKLLKENKVEYKPSEIVVSAGAKMVLFLIFMAILDEGDEVLLPSPYWVTYPEQIRFFGGVPVEVPLKKEKGFQLSLEDVKEKVTERTKAIVINSPNNPTGAVYEEEELKKIAEFCVERGIFIISDECYEYFVYGDAKFVSPASFSDEVKNITFTVNAFSKSYSMTGWRIGYVACPEEYAKVIASLNSQSVSNVTTFAQYGALEALKNPKSKDFVNEMRNAFERRRDTAVEELSKIPGMDVVKPEGAFYIFPDFSAYAEKLGGDVKLSEFLLEKAKVAVVPGSAFGAPGFLRLSYALSEERLVEGIRRIKKALEEI.

Residues Gly40, Trp126, and Asn176 each coordinate L-aspartate. Residue Lys239 is modified to N6-(pyridoxal phosphate)lysine. Arg370 is an L-aspartate binding site.

Belongs to the class-I pyridoxal-phosphate-dependent aminotransferase family. Homodimer. The cofactor is pyridoxal 5'-phosphate.

The protein localises to the cytoplasm. The enzyme catalyses L-aspartate + 2-oxoglutarate = oxaloacetate + L-glutamate. It carries out the reaction L-arogenate + oxaloacetate = prephenate + L-aspartate. In terms of biological role, catalyzes the reversible conversion of aspartate and 2-oxoglutarate to glutamate and oxaloacetate. Can also transaminate prephenate in the presence of aspartate. The sequence is that of Probable aspartate/prephenate aminotransferase (aspC) from Aquifex aeolicus (strain VF5).